The primary structure comprises 444 residues: MKNVVIVGGGAGGIELATFLGNKLGRQKQAKVTLVDRNATHLWKPLLHEIATGVMDDGVDSLSYRAHGKNHFFSFEQGSIIRINREQKYVELAPVYGQEGDMLVIARRIPYDYLVIAIGSKSNDFNTKGVADNCIFLDSSKQALRFQHKLLELFLKFSENRALDDIGEEEFKQKLVDENKVNIAIVGGGATGVELTAELYHAAEDLSSYGYGKIDSSCLQVTLVEAGTRLLPALPENLSAAVLDELKEMGTNVQLNTMITEAQPNTLITKDGGEIKADLIVWAAGVRASTVTQQFDGLEINRINQLVVKDTLQTTVDDSIFAIGDCAALIQSNGKLVPPRAQAAHQMAKACAKNIFALFENKPLKSFKYNDKGTLVSLSNFTALGSLTNKFGKNPLTVQGKFAQFAYVSLYRMHQHALHGCIKIGLIILVDKLNRYLKPRLKLH.

FAD is bound by residues 8–12 (GGGAG), asparagine 38, and serine 120. NAD(+) contacts are provided by residues 186–191 (VGGGAT) and glycine 285. FAD is bound by residues aspartate 325 and alanine 341.

It belongs to the NADH dehydrogenase family. FAD is required as a cofactor.

It is found in the cell inner membrane. It carries out the reaction a quinone + NADH + H(+) = a quinol + NAD(+). The catalysed reaction is a ubiquinone + NADH + H(+) = a ubiquinol + NAD(+). Its function is as follows. Alternative, nonproton pumping NADH:quinone oxidoreductase that delivers electrons to the respiratory chain by oxidation of NADH and reduction of quinones. Utilizes NADH exclusively, and electron flow from NADH to ubiquinone does not generate an electrochemical gradient. This chain is Type II NADH:quinone oxidoreductase (ndh), found in Haemophilus influenzae (strain ATCC 51907 / DSM 11121 / KW20 / Rd).